The sequence spans 475 residues: Aspartyl/glutamyl-tRNA(Asn/Gln) amidotransferase subunit B (475 aa).

The protein belongs to the GatB/GatE family. GatB subfamily. As to quaternary structure, heterotrimer of A, B and C subunits.

The enzyme catalyses L-glutamyl-tRNA(Gln) + L-glutamine + ATP + H2O = L-glutaminyl-tRNA(Gln) + L-glutamate + ADP + phosphate + H(+). It catalyses the reaction L-aspartyl-tRNA(Asn) + L-glutamine + ATP + H2O = L-asparaginyl-tRNA(Asn) + L-glutamate + ADP + phosphate + 2 H(+). Functionally, allows the formation of correctly charged Asn-tRNA(Asn) or Gln-tRNA(Gln) through the transamidation of misacylated Asp-tRNA(Asn) or Glu-tRNA(Gln) in organisms which lack either or both of asparaginyl-tRNA or glutaminyl-tRNA synthetases. The reaction takes place in the presence of glutamine and ATP through an activated phospho-Asp-tRNA(Asn) or phospho-Glu-tRNA(Gln). The protein is Aspartyl/glutamyl-tRNA(Asn/Gln) amidotransferase subunit B of Clostridium novyi (strain NT).